Consider the following 510-residue polypeptide: MIWHVQNENFILDSTRIFMKAFHLLLFNGSFIFPECILIFGLILLLMIDLTSDQKDRPWFYFISSTSLVISITALLFRWREEPIISFSGNFQTNNFNEIFQFLILLCSTLCIPLSVEYIECTEMAITEFLLFVLTATLGGMFLCGANDLITIFVALECFSLCSYLLSGYTKRDLRSNEATMKYLLMGGASSSILVYGFSWLYGLSGGEIELQEIVNGLINTQMYNSPGISIALIFITVGLGFKLSLAPFHQWTPDVYEGSPTPVVAFLSVTSKVAALALATRILDIPFYFSSNEWHLLLEILAILSMILGNLLAITQTSMKRMLAYSSIGQIGYVIIGIIVGDSNDGYASMITYMLFYISMNLGTFACIVLFGLRTGTDNIRDYAGLYMKDPFLALSLALCLLSLGGLPPLAGFFGKLYLFWCGWQAGLYFLVSIGLLTSVLSIYYYLKIIKLLMTGRNQEITPYVRNYRRSPLRSNNSIELSMTVCVIASTILGISMNPILAIAQDTLF.

The next 14 membrane-spanning stretches (helical) occupy residues 31 to 51, 59 to 79, 99 to 119, 124 to 144, 149 to 169, 184 to 204, 229 to 249, 261 to 281, 295 to 315, 323 to 343, 354 to 374, 395 to 415, 418 to 438, and 484 to 504; these read FIFP…IDLT, WFYF…LFRW, IFQF…VEYI, MAIT…MFLC, LITI…LSGY, LLMG…LYGL, ISIA…LAPF, PTPV…ALAT, WHLL…LLAI, MLAY…IVGD, YMLF…LFGL, ALSL…AGFF, LYLF…IGLL, and MTVC…ILAI.

This sequence belongs to the complex I subunit 2 family. As to quaternary structure, NDH is composed of at least 16 different subunits, 5 of which are encoded in the nucleus.

The protein resides in the plastid. It localises to the chloroplast thylakoid membrane. The catalysed reaction is a plastoquinone + NADH + (n+1) H(+)(in) = a plastoquinol + NAD(+) + n H(+)(out). It carries out the reaction a plastoquinone + NADPH + (n+1) H(+)(in) = a plastoquinol + NADP(+) + n H(+)(out). Its function is as follows. NDH shuttles electrons from NAD(P)H:plastoquinone, via FMN and iron-sulfur (Fe-S) centers, to quinones in the photosynthetic chain and possibly in a chloroplast respiratory chain. The immediate electron acceptor for the enzyme in this species is believed to be plastoquinone. Couples the redox reaction to proton translocation, and thus conserves the redox energy in a proton gradient. This Hordeum vulgare (Barley) protein is NAD(P)H-quinone oxidoreductase subunit 2 B, chloroplastic.